The chain runs to 153 residues: Cyanate hydratase (153 aa).

Catalysis depends on residues R88, E91, and S114.

Belongs to the cyanase family.

It catalyses the reaction cyanate + hydrogencarbonate + 3 H(+) = NH4(+) + 2 CO2. Its function is as follows. Catalyzes the reaction of cyanate with bicarbonate to produce ammonia and carbon dioxide. The polypeptide is Cyanate hydratase (Mycolicibacterium vanbaalenii (strain DSM 7251 / JCM 13017 / BCRC 16820 / KCTC 9966 / NRRL B-24157 / PYR-1) (Mycobacterium vanbaalenii)).